We begin with the raw amino-acid sequence, 156 residues long: Arginine repressor (156 aa).

It belongs to the ArgR family.

It is found in the cytoplasm. It participates in amino-acid biosynthesis; L-arginine biosynthesis [regulation]. In terms of biological role, regulates arginine biosynthesis genes. This Shewanella sediminis (strain HAW-EB3) protein is Arginine repressor.